A 962-amino-acid chain; its full sequence is Glycine dehydrogenase (decarboxylating) (962 aa).

K709 is subject to N6-(pyridoxal phosphate)lysine.

The protein belongs to the GcvP family. In terms of assembly, the glycine cleavage system is composed of four proteins: P, T, L and H. Pyridoxal 5'-phosphate serves as cofactor.

The enzyme catalyses N(6)-[(R)-lipoyl]-L-lysyl-[glycine-cleavage complex H protein] + glycine + H(+) = N(6)-[(R)-S(8)-aminomethyldihydrolipoyl]-L-lysyl-[glycine-cleavage complex H protein] + CO2. Functionally, the glycine cleavage system catalyzes the degradation of glycine. The P protein binds the alpha-amino group of glycine through its pyridoxal phosphate cofactor; CO(2) is released and the remaining methylamine moiety is then transferred to the lipoamide cofactor of the H protein. The sequence is that of Glycine dehydrogenase (decarboxylating) from Shewanella baltica (strain OS223).